A 756-amino-acid chain; its full sequence is Zinc finger and BTB domain-containing protein 49 (756 aa).

The 67-residue stretch at 25–91 (CDCMLVVRGV…MYTSRLDLNQ (67 aa)) folds into the BTB domain. 3 disordered regions span residues 176–197 (APSANFSRPTEVSKPDAAGGSC), 226–290 (PSQV…LSEP), and 311–379 (SQQS…PSQA). The segment covering 226–242 (PSQVPATQQPLTRSAST) has biased composition (polar residues). 2 stretches are compositionally biased toward basic and acidic residues: residues 319 to 341 (SHPEPDNGLARREESAAKEDAVE) and 348 to 365 (AEEKGRGELGPESSREEE). 7 C2H2-type zinc fingers span residues 386–408 (YACELCGKPFKHPSNLELHKRSH), 414–436 (FECNICGKHFSQAGNLQTHLRRH), 442–464 (YICEICGKRFAASGDVQRHIIIH), 470–492 (HLCDTCGRGFSNFSNLKEHKKTH), 498–520 (FTCDECGKSFNMQRKLVKHRVRH), 526–548 (YSCPACGKCFGGSGDLRRHVRTH), and 554–576 (YSCEVCSKCFTRSAVLRRHKRMH).

Belongs to the krueppel C2H2-type zinc-finger protein family. In terms of assembly, interacts with EP300, KAT5/Tip60 and ZBTB17. The interaction with EP300 is direct and leads to synergistic induction of CDKN1A. On the CDKN1A promoter, forms a complex with ZBTB17; this interaction leads to additive CDKN1A transactivation. The interaction with ZBTB17 may block ZBTB17 repressor activity. Widely expressed, with highest levels in white adipose tissue and kidney, intermediate levels in brain, liver and heart, and lowest levels in spleen, brown adipose tissue and muscle.

It is found in the cytoplasm. The protein localises to the nucleus. Transcription factor. Inhibits cell proliferation by activating either CDKN1A/p21 transcription or RB1 transcription. The sequence is that of Zinc finger and BTB domain-containing protein 49 (Zbtb49) from Mus musculus (Mouse).